We begin with the raw amino-acid sequence, 518 residues long: Glutamate--cysteine ligase (518 aa).

Belongs to the glutamate--cysteine ligase type 1 family. Type 1 subfamily.

It carries out the reaction L-cysteine + L-glutamate + ATP = gamma-L-glutamyl-L-cysteine + ADP + phosphate + H(+). It functions in the pathway sulfur metabolism; glutathione biosynthesis; glutathione from L-cysteine and L-glutamate: step 1/2. The polypeptide is Glutamate--cysteine ligase (gshA) (Buchnera aphidicola subsp. Acyrthosiphon pisum (strain APS) (Acyrthosiphon pisum symbiotic bacterium)).